The primary structure comprises 316 residues: Protoheme IX farnesyltransferase (316 aa).

9 consecutive transmembrane segments (helical) span residues 32–52 (VMSL…GHIH), 53–73 (PVLG…SGAL), 93–113 (IPAG…LSGF), 116–136 (VILG…TIFF), 152–172 (NIVI…ACVT), 180–200 (TVLF…LALF), 221–241 (VTKH…ILPS), 252–271 (LVAA…VWRM), and 289–309 (IFYL…SIFV).

Belongs to the UbiA prenyltransferase family. Protoheme IX farnesyltransferase subfamily.

It localises to the cell inner membrane. The enzyme catalyses heme b + (2E,6E)-farnesyl diphosphate + H2O = Fe(II)-heme o + diphosphate. It functions in the pathway porphyrin-containing compound metabolism; heme O biosynthesis; heme O from protoheme: step 1/1. In terms of biological role, converts heme B (protoheme IX) to heme O by substitution of the vinyl group on carbon 2 of heme B porphyrin ring with a hydroxyethyl farnesyl side group. The protein is Protoheme IX farnesyltransferase of Rhizobium leguminosarum bv. trifolii (strain WSM2304).